We begin with the raw amino-acid sequence, 296 residues long: Nitrogenase iron protein (296 aa).

11 to 18 (GKGGIGKS) contacts ATP. C99 lines the [4Fe-4S] cluster pocket. R102 carries the ADP-ribosylarginine; by dinitrogenase reductase ADP-ribosyltransferase modification. C133 serves as a coordination point for [4Fe-4S] cluster.

Belongs to the NifH/BchL/ChlL family. In terms of assembly, homodimer. The cofactor is [4Fe-4S] cluster. The reversible ADP-ribosylation of Arg-102 inactivates the nitrogenase reductase and regulates nitrogenase activity.

It catalyses the reaction N2 + 8 reduced [2Fe-2S]-[ferredoxin] + 16 ATP + 16 H2O = H2 + 8 oxidized [2Fe-2S]-[ferredoxin] + 2 NH4(+) + 16 ADP + 16 phosphate + 6 H(+). Functionally, the key enzymatic reactions in nitrogen fixation are catalyzed by the nitrogenase complex, which has 2 components: the iron protein and the molybdenum-iron protein. This chain is Nitrogenase iron protein (nifH1), found in Sinorhizobium fredii (strain NBRC 101917 / NGR234).